The primary structure comprises 861 residues: Probable beta-glucosidase A (861 aa).

The first 19 residues, 1 to 19, serve as a signal peptide directing secretion; it reads MKLSILEAAALTAASVVSA. 3 N-linked (GlcNAc...) asparagine glycosylation sites follow: Asn-62, Asn-212, and Asn-253. Asp-281 is a catalytic residue. Residues Asn-316, Asn-323, Asn-355, Asn-524, Asn-543, Asn-565, Asn-669, and Asn-713 are each glycosylated (N-linked (GlcNAc...) asparagine). A disordered region spans residues 735 to 754; it reads PEGATDGSPQPRLPASGGPG.

The protein belongs to the glycosyl hydrolase 3 family.

Its subcellular location is the secreted. The catalysed reaction is Hydrolysis of terminal, non-reducing beta-D-glucosyl residues with release of beta-D-glucose.. The protein operates within glycan metabolism; cellulose degradation. In terms of biological role, beta-glucosidases are one of a number of cellulolytic enzymes involved in the degradation of cellulosic biomass. Catalyzes the last step releasing glucose from the inhibitory cellobiose. The chain is Probable beta-glucosidase A (bglA) from Aspergillus terreus (strain NIH 2624 / FGSC A1156).